The sequence spans 379 residues: MPAVKIIMSTETSASETTPLRRSENETPDHKELAQSNSNSRQTTVNSNNNNYSNSVQVRLQEQDRDSDSEQQQHTATITMDTNKRILCRVGLDVLILLCAGFPILLFFLLGEPYKRGFFCDDESLKHPFHDSTVRNWMLYFIGAVIPVGVIFIVEVIISQNKAKQDNGNATSRRYVFMNYELPDWMIECYKKIGIYAFGAVLSQLTTDIAKYSIGRLRPHFIAVCQPQMADGSTCDDAINAGKYIQEFTCKGVGSSARMLKEMRLSFPSGHSSFTFFAMVYLALYLQARMTWRGSKLLRHLLQFLFIMVAWYTALSRVSDYKHHWSDVLAGSLIGSISALVVANYVSDLFQKPNTKPYLARTVQDMNASPAQAITITTN.

The segment at 1–53 is disordered; sequence MPAVKIIMSTETSASETTPLRRSENETPDHKELAQSNSNSRQTTVNSNNNNYS. Polar residues predominate over residues 9–18; the sequence is STETSASETT. A compositionally biased stretch (basic and acidic residues) spans 19–33; the sequence is PLRRSENETPDHKEL. Over residues 35-53 the composition is skewed to low complexity; sequence QSNSNSRQTTVNSNNNNYS. Residue Asn51 is glycosylated (N-linked (GlcNAc...) asparagine). 2 helical membrane passes run 90 to 110 and 138 to 158; these read VGLD…FFLL and MLYF…EVII. Asn169 is a glycosylation site (N-linked (GlcNAc...) asparagine). The next 2 helical transmembrane spans lie at 266–286 and 330–350; these read SFPS…ALYL and AGSL…SDLF.

This sequence belongs to the PA-phosphatase related phosphoesterase family. Homodimer. This complex seems not to be involved in substrate recognition, it may confer only structural or functional stability. Expressed in embryonic gut in a pattern that guides germ cells towards mesoderm (initially in hindgut and then on lower side of gut). During extended germ band stage, expressed in ectoderm as a medial band throughout the trunk.

It localises to the membrane. The catalysed reaction is a 1,2-diacyl-sn-glycero-3-phosphate + H2O = a 1,2-diacyl-sn-glycerol + phosphate. Responsible for guiding the germ cells early in the process of migration from the lumen of the developing gut towards the overlying mesoderm, where the germ cells enter the gonads. May be involved in lipid metabolism. The protein is Putative phosphatidate phosphatase (wun) of Drosophila melanogaster (Fruit fly).